Here is a 281-residue protein sequence, read N- to C-terminus: Energy-coupling factor transporter ATP-binding protein EcfA2 (281 aa).

In terms of domain architecture, ABC transporter spans 3 to 242; sequence IKVTGLTYVY…TETLEEIGLA (240 aa). 40 to 47 lines the ATP pocket; sequence GHTGSGKS.

This sequence belongs to the ABC transporter superfamily. Energy-coupling factor EcfA family. Forms a stable energy-coupling factor (ECF) transporter complex composed of 2 membrane-embedded substrate-binding proteins (S component), 2 ATP-binding proteins (A component) and 2 transmembrane proteins (T component).

The protein resides in the cell membrane. Its function is as follows. ATP-binding (A) component of a common energy-coupling factor (ECF) ABC-transporter complex. Unlike classic ABC transporters this ECF transporter provides the energy necessary to transport a number of different substrates. The chain is Energy-coupling factor transporter ATP-binding protein EcfA2 from Acetivibrio thermocellus (strain ATCC 27405 / DSM 1237 / JCM 9322 / NBRC 103400 / NCIMB 10682 / NRRL B-4536 / VPI 7372) (Clostridium thermocellum).